We begin with the raw amino-acid sequence, 70 residues long: Brevinin-ALb (70 aa).

The signal sequence occupies residues 1–22 (MFTLKKSLLLLFFLGTINLSLC). The propeptide occupies 23–46 (EQERDADEEERRDDDEMDVEVEKR). C64 and C70 are oxidised to a cystine.

In terms of tissue distribution, expressed by the skin glands.

Its subcellular location is the secreted. Antimicrobial peptide with activity against Gram-positive and Gram-negative bacteria and against fungi. Has been tested against S.aureus (MIC=5.5 ug/mL), E.coli (MIC=6.5 ug/mL), B.dysenteriae (MIC=2.2 ug/mL), and C.albicans (MIC=7.5 ug/mL). Can regulate or mediate antimicrobial response by stimulating mast cell degranulation. Induces histamine release. Shows cytotoxicity toward solid tumor cell line HepG2. Also shows a potent hemolytic activity (LD(50)=5 ug/ml). This is Brevinin-ALb from Amolops loloensis (Lolokou Sucker Frog).